The sequence spans 105 residues: Large ribosomal subunit protein P1 (105 aa).

Blocked amino end (Met) is present on Met-1. A compositionally biased stretch (low complexity) spans 65–76 (VAAPAGQQTQQA). A disordered region spans residues 65–105 (VAAPAGQQTQQAAEKKEEKKEEEKKGPSEEEIGGGLSSLFG). Positions 77–92 (AEKKEEKKEEEKKGPS) are enriched in basic and acidic residues.

This sequence belongs to the eukaryotic ribosomal protein P1/P2 family. Part of the 50S ribosomal subunit. Homodimer, it forms part of the ribosomal stalk which helps the ribosome interact with GTP-bound translation factors. Forms a heptameric uL10/P0(P1)2(P1)2(P1)2 complex, where uL10/P0 forms an elongated spine to which the P1 dimers bind in a sequential fashion.

Forms part of the ribosomal stalk, playing a central role in the interaction of the ribosome with GTP-bound translation factors. In Sulfolobus acidocaldarius (strain ATCC 33909 / DSM 639 / JCM 8929 / NBRC 15157 / NCIMB 11770), this protein is Large ribosomal subunit protein P1.